The chain runs to 385 residues: UDP-N-acetylglucosamine--N-acetylmuramyl-(pentapeptide) pyrophosphoryl-undecaprenol N-acetylglucosamine transferase (385 aa).

UDP-N-acetyl-alpha-D-glucosamine-binding positions include threonine 11 to glycine 13, asparagine 117, arginine 160, serine 215, and glutamine 317.

It belongs to the glycosyltransferase 28 family. MurG subfamily.

The protein localises to the cell inner membrane. It carries out the reaction di-trans,octa-cis-undecaprenyl diphospho-N-acetyl-alpha-D-muramoyl-L-alanyl-D-glutamyl-meso-2,6-diaminopimeloyl-D-alanyl-D-alanine + UDP-N-acetyl-alpha-D-glucosamine = di-trans,octa-cis-undecaprenyl diphospho-[N-acetyl-alpha-D-glucosaminyl-(1-&gt;4)]-N-acetyl-alpha-D-muramoyl-L-alanyl-D-glutamyl-meso-2,6-diaminopimeloyl-D-alanyl-D-alanine + UDP + H(+). It participates in cell wall biogenesis; peptidoglycan biosynthesis. Its function is as follows. Cell wall formation. Catalyzes the transfer of a GlcNAc subunit on undecaprenyl-pyrophosphoryl-MurNAc-pentapeptide (lipid intermediate I) to form undecaprenyl-pyrophosphoryl-MurNAc-(pentapeptide)GlcNAc (lipid intermediate II). This Rickettsia typhi (strain ATCC VR-144 / Wilmington) protein is UDP-N-acetylglucosamine--N-acetylmuramyl-(pentapeptide) pyrophosphoryl-undecaprenol N-acetylglucosamine transferase.